We begin with the raw amino-acid sequence, 155 residues long: Aspartate carbamoyltransferase regulatory chain (155 aa).

Positions 112, 117, 140, and 143 each coordinate Zn(2+).

Belongs to the PyrI family. In terms of assembly, contains catalytic and regulatory chains. Requires Zn(2+) as cofactor.

Its function is as follows. Involved in allosteric regulation of aspartate carbamoyltransferase. The protein is Aspartate carbamoyltransferase regulatory chain of Phocaeicola vulgatus (strain ATCC 8482 / DSM 1447 / JCM 5826 / CCUG 4940 / NBRC 14291 / NCTC 11154) (Bacteroides vulgatus).